The chain runs to 342 residues: (Lyso)-N-acylphosphatidylethanolamine lipase (342 aa).

Residues Pro70–Tyr323 enclose the AB hydrolase-1 domain.

This sequence belongs to the peptidase S33 family. ABHD4/ABHD5 subfamily. In terms of tissue distribution, highest levels in the CNS and in testis, intermediate levels in liver and kidney. Hardly detectable in heart.

It catalyses the reaction N-hexadecanoyl-1,2-di-(9Z-octadecenoyl)-sn-glycero-3-phosphoethanolamine + H2O = N-hexadecanoyl-1-(9Z-octadecenoyl)-sn-glycero-3-phosphoethanolamine + (9Z)-octadecenoate + H(+). The catalysed reaction is an N-acyl-1,2-diacyl-sn-glycero-3-phosphoethanolamine + H2O = N,1-diacyl-sn-glycero-3-phosphoethanolamine + a fatty acid + H(+). It carries out the reaction N-hexadecanoyl-1-(9Z-octadecenoyl)-sn-glycero-3-phosphoethanolamine + H2O = N-hexadecanoyl-sn-glycero-3-phosphoethanolamine + (9Z)-octadecenoate + H(+). The enzyme catalyses N-octadecanoyl-1-(9Z-octadecenoyl)-sn-glycero-3-phosphoethanolamine + H2O = N-octadecanoyl-sn-glycero-3-phospho-ethanolamine + (9Z)-octadecenoate + H(+). It catalyses the reaction N-eicosanoyl-1-(9Z-octadecenoyl)-sn-glycero-3-phosphoethanolamine + H2O = N-eicosanoyl-sn-glycero-3-phosphoethanolamine + (9Z)-octadecenoate + H(+). The catalysed reaction is N,1-di-(9Z-octadecenoyl)-sn-glycero-3-phosphoethanolamine + H2O = N-(9Z-octadecenoyl)-sn-glycero-3-phosphoethanolamine + (9Z)-octadecenoate + H(+). It carries out the reaction N-(5Z,8Z,11Z,14Z-eicosatetraenoyl)-1-(9Z-octadecenoyl)-sn-glycero-3-phosphoethanolamine + H2O = N-(5Z,8Z,11Z,14Z-eicosatetraenoyl)-sn-glycero-3-phosphoethanolamine + (9Z)-octadecenoate + H(+). The enzyme catalyses 1-octadecanoyl-2-(9Z-octadecenoyl)-sn-glycero-3-phospho-(N-hexadecanoyl)-serine + H2O = 1-octadecanoyl-2-hydroxy-sn-glycero-3-phospho-(N-hexadecanoyl)-serine + (9Z)-octadecenoate + H(+). It catalyses the reaction 1-O-(1Z-octadecenoyl)-2-(9Z-octadecenoyl)-sn-glycero-3-phospho-N-hexadecanoyl-ethanolamine + H2O = 1-O-(1Z-octadecenyl)-sn-glycero-3-phospho-N-hexadecanoyl-ethanolamine + (9Z)-octadecenoate + H(+). The catalysed reaction is N,1-diacyl-sn-glycero-3-phosphoethanolamine + H2O = N-acyl-sn-glycero-3-phosphoethanolamine + a fatty acid + H(+). Lysophospholipase selective for N-acyl phosphatidylethanolamine (NAPE). Contributes to the biosynthesis of N-acyl ethanolamines, including the endocannabinoid anandamide by hydrolyzing the sn-1 and sn-2 acyl chains from N-acyl phosphatidylethanolamine (NAPE) generating glycerophospho-N-acyl ethanolamine (GP-NAE), an intermediate for N-acyl ethanolamine biosynthesis. Hydrolyzes substrates bearing saturated, monounsaturated, polyunsaturated N-acyl chains. Shows no significant activity towards other lysophospholipids, including lysophosphatidylcholine, lysophosphatidylethanolamine and lysophosphatidylserine. In Mus musculus (Mouse), this protein is (Lyso)-N-acylphosphatidylethanolamine lipase.